The following is a 408-amino-acid chain: Peptidase T (408 aa).

His78 is a binding site for Zn(2+). The active site involves Asp80. Position 141 (Asp141) interacts with Zn(2+). Glu175 serves as the catalytic Proton acceptor. Residues Glu176, Asp198, and His380 each coordinate Zn(2+).

It belongs to the peptidase M20B family. It depends on Zn(2+) as a cofactor.

It is found in the cytoplasm. The enzyme catalyses Release of the N-terminal residue from a tripeptide.. In terms of biological role, cleaves the N-terminal amino acid of tripeptides. In Clostridium botulinum (strain Okra / Type B1), this protein is Peptidase T.